The chain runs to 124 residues: Large ribosomal subunit protein bL12 (124 aa).

This sequence belongs to the bacterial ribosomal protein bL12 family. As to quaternary structure, homodimer. Part of the ribosomal stalk of the 50S ribosomal subunit. Forms a multimeric L10(L12)X complex, where L10 forms an elongated spine to which 2 to 4 L12 dimers bind in a sequential fashion. Binds GTP-bound translation factors.

Functionally, forms part of the ribosomal stalk which helps the ribosome interact with GTP-bound translation factors. Is thus essential for accurate translation. The protein is Large ribosomal subunit protein bL12 of Burkholderia cenocepacia (strain ATCC BAA-245 / DSM 16553 / LMG 16656 / NCTC 13227 / J2315 / CF5610) (Burkholderia cepacia (strain J2315)).